Reading from the N-terminus, the 261-residue chain is Kallikrein-1 (261 aa).

A signal peptide spans 1–18 (MRFLILFLALSLGGIDAA). The propeptide at 19-24 (PPVQSR) is activation peptide. The Peptidase S1 domain maps to 25 to 258 (IVGGFNCEKN…FNTWIRETMA (234 aa)). 5 cysteine pairs are disulfide-bonded: C31/C173, C50/C66, C152/C219, C184/C198, and C209/C234. The Charge relay system role is filled by H65. N102 carries an N-linked (GlcNAc...) asparagine glycan. D120 (charge relay system) is an active-site residue. The active-site Charge relay system is the S213.

The protein belongs to the peptidase S1 family. Kallikrein subfamily.

It catalyses the reaction Preferential cleavage of Arg-|-Xaa bonds in small molecule substrates. Highly selective action to release kallidin (lysyl-bradykinin) from kininogen involves hydrolysis of Met-|-Xaa or Leu-|-Xaa.. In terms of biological role, glandular kallikreins cleave Met-Lys and Arg-Ser bonds in kininogen to release Lys-bradykinin. The protein is Kallikrein-1 (Klk1) of Mus musculus (Mouse).